The chain runs to 836 residues: MIRGRTAKVIPRNVIFTLSRSSISESPLISPSRINPKLAGSFSFNIRLLSYFTVRNGFCPDCSVPRDPNFVGLTTQCRSIVRRFCSEKIGSSESSGWTEEVEYLDESGSVLHSGKGIRSVEPGLDDHVMVGGLKKPYMNASSVAKIVEVVQRWKWGPELETQLDKLQFVPNMVHITQSLKIVKEVDAALSLFRWAKKQPWYLPSDECYVVLFDGLNQGRDFVGIQSLFEEMVQDSSSHGDLSFNAYNQVIQYLAKAEKLEVAFCCFKKAQESGCKIDTQTYNNLMMLFLNKGLPYKAFEIYESMEKTDSLLDGSTYELIIPSLAKSGRLDAAFKLFQQMKERKLRPSFSVFSSLVDSMGKAGRLDTSMKVYMEMQGFGHRPSATMFVSLIDSYAKAGKLDTALRLWDEMKKSGFRPNFGLYTMIIESHAKSGKLEVAMTVFKDMEKAGFLPTPSTYSCLLEMHAGSGQVDSAMKIYNSMTNAGLRPGLSSYISLLTLLANKRLVDVAGKILLEMKAMGYSVDVCASDVLMIYIKDASVDLALKWLRFMGSSGIKTNNFIIRQLFESCMKNGLYDSARPLLETLVHSAGKVDLVLYTSILAHLVRCQDEDKERQLMSILSATKHKAHAFMCGLFTGPEQRKQPVLTFVREFYQGIDYELEEGAARYFVNVLLNYLVLMGQINRARCVWKVAYENKLFPKAIVFDQHIAWSLDVRNLSVGAALIAVVHTLHRFRKRMLYYGVVPRRIKLVTGPTLKIVIAQMLSSVESPFEVSKVVLRAPGELVMEWFKKPIVQQFLLNEIPSRSDILMHKMNVMFPSSAPELRSMSPPKPLMSSKAF.

Residues 1-85 (MIRGRTAKVI…QCRSIVRRFC (85 aa)) constitute a mitochondrion transit peptide. PPR repeat units follow at residues 204-238 (SDECYVVLFDGLNQGRDFVGIQSLFEEMVQDSSSH), 242-276 (SFNAYNQVIQYLAKAEKLEVAFCCFKKAQESGCKI), 277-311 (DTQTYNNLMMLFLNKGLPYKAFEIYESMEKTDSLL), 312-346 (DGSTYELIIPSLAKSGRLDAAFKLFQQMKERKLRP), 347-381 (SFSVFSSLVDSMGKAGRLDTSMKVYMEMQGFGHRP), 382-416 (SATMFVSLIDSYAKAGKLDTALRLWDEMKKSGFRP), 417-451 (NFGLYTMIIESHAKSGKLEVAMTVFKDMEKAGFLP), 452-486 (TPSTYSCLLEMHAGSGQVDSAMKIYNSMTNAGLRP), 487-521 (GLSSYISLLTLLANKRLVDVAGKILLEMKAMGYSV), 528-555 (VLMIYIKDASVDLALKWLRFMGSSGIKT), 556-590 (NNFIIRQLFESCMKNGLYDSARPLLETLVHSAGKV), and 591-625 (DLVLYTSILAHLVRCQDEDKERQLMSILSATKHKA). Residues 710–786 (LDVRNLSVGA…APGELVMEWF (77 aa)) form the Smr domain.

This sequence belongs to the PPR family. P subfamily.

It localises to the mitochondrion. This Arabidopsis thaliana (Mouse-ear cress) protein is Pentatricopeptide repeat-containing protein At1g79490, mitochondrial (EMB2217).